We begin with the raw amino-acid sequence, 108 residues long: UPF0145 protein SYNPCC7002_A1337 (108 aa).

It belongs to the UPF0145 family.

The sequence is that of UPF0145 protein SYNPCC7002_A1337 from Picosynechococcus sp. (strain ATCC 27264 / PCC 7002 / PR-6) (Agmenellum quadruplicatum).